An 89-amino-acid chain; its full sequence is uncharacterized protein (89 aa).

This is an uncharacterized protein from Geobacillus stearothermophilus (Bacillus stearothermophilus).